A 173-amino-acid polypeptide reads, in one-letter code: Shikimate kinase 2 (173 aa).

An ATP-binding site is contributed by 12-17; it reads GCGKTT. Mg(2+) is bound by residues Thr16 and Asp32. Asp34, Arg58, and Gly79 together coordinate substrate. Positions 112–126 are LID domain; sequence QASPQAHQRPTLTGR. Arg120 contacts ATP. Arg139 lines the substrate pocket. An ATP-binding site is contributed by Gln155.

In terms of assembly, monomer. Requires Mg(2+) as cofactor.

It localises to the cytoplasm. The enzyme catalyses shikimate + ATP = 3-phosphoshikimate + ADP + H(+). Its pathway is metabolic intermediate biosynthesis; chorismate biosynthesis; chorismate from D-erythrose 4-phosphate and phosphoenolpyruvate: step 5/7. With respect to regulation, inhibited by chloride and sulfate ions. In terms of biological role, catalyzes the specific phosphorylation of the 3-hydroxyl group of shikimic acid using ATP as a cosubstrate. The sequence is that of Shikimate kinase 2 (aroL) from Dickeya chrysanthemi (Pectobacterium chrysanthemi).